The chain runs to 371 residues: Aromatic peroxygenase (371 aa).

An N-terminal signal peptide occupies residues 1–18 (MKYFPLFPTLVFAARVVA). A propeptide spanning residues 19–43 (FPAYASLAGLSQQELDAIIPTLEAR) is cleaved from the precursor. N54 carries an N-linked (GlcNAc...) asparagine glycan. Residue C79 coordinates heme. N-linked (GlcNAc...) asparagine glycosylation is found at N184, N204, N225, and N329. Residues C321 and C362 are joined by a disulfide bond.

This sequence belongs to the chloroperoxidase family. Heme b is required as a cofactor. N-glycosylated.

The catalysed reaction is RH + H2O2 = ROH + H2O.. Aromatic peroxidase that oxidizes aryl alcohols into the corresponding aldehydes and then into the corresponding benzoic acids. Oxidizes toluene and naphthalene. Catalyzes the regioselective peroxide-dependent hydroxylation of propranolol and diclofenac to 5-hydroxypropranolol and 4'-hydroxydiclofenac. Catalyzes the regioselective peroxide-dependent hydroxylation of naphthalene to 1-naphthol or 2-naphthol via a naphthalene 1,2-oxide intermediate. Catalyzes the regioselective peroxide-dependent oxidation of pyridine to pyridine N-oxide. Halogenates monochlorodimedone and phenol. Oxidizes the sulfur-containing heterocycle dibenzothiophene to yield ring-hydroxylation products and to a lesser extent sulfoxidation products. This Cyclocybe aegerita (Black poplar mushroom) protein is Aromatic peroxygenase.